We begin with the raw amino-acid sequence, 145 residues long: Large-conductance mechanosensitive channel (145 aa).

2 helical membrane passes run 30–50 (VAVV…AWLM) and 74–94 (GELV…FLII).

This sequence belongs to the MscL family. As to quaternary structure, homopentamer.

The protein localises to the cell inner membrane. Functionally, channel that opens in response to stretch forces in the membrane lipid bilayer. May participate in the regulation of osmotic pressure changes within the cell. The chain is Large-conductance mechanosensitive channel from Synechocystis sp. (strain ATCC 27184 / PCC 6803 / Kazusa).